Here is a 20-residue protein sequence, read N- to C-terminus: MIINHNMSAINAQXVQGBVT.

The protein belongs to the bacterial flagellin family. In terms of assembly, the flagellum consists of an outer layer composed of repeating units of FlaA around a core that contains one or all of five antigenically related polypeptides.

Its subcellular location is the periplasmic flagellum. The protein resides in the periplasm. Functionally, component of the core of the flagella. The protein is Flagellar filament 33 kDa core protein of Spirochaeta aurantia.